Here is a 500-residue protein sequence, read N- to C-terminus: L-arabinose isomerase (500 aa).

Residues Glu306, Glu333, His350, and His450 each contribute to the Mn(2+) site.

It belongs to the arabinose isomerase family. As to quaternary structure, homohexamer. The cofactor is Mn(2+).

It carries out the reaction beta-L-arabinopyranose = L-ribulose. It participates in carbohydrate degradation; L-arabinose degradation via L-ribulose; D-xylulose 5-phosphate from L-arabinose (bacterial route): step 1/3. Its function is as follows. Catalyzes the conversion of L-arabinose to L-ribulose. The sequence is that of L-arabinose isomerase from Salmonella typhi.